Consider the following 727-residue polypeptide: AN1-type zinc finger protein 4 (727 aa).

Residues 28-103 enclose the Ubiquitin-like domain; sequence MELFIETLTG…LKLVLAMRGG (76 aa). Disordered regions lie at residues 187–217 and 238–264; these read HRMS…IIEN and KKPK…TAPS. The segment covering 238-248 has biased composition (basic residues); the sequence is KKPKKAVKIKP. An AN1-type zinc finger spans residues 661–708; sequence KKTTNHCFLCGKKTGLASSYECRCGNNFCASHRYAETHGCTYDYKSAG. Cys667, Cys670, Cys682, Cys684, Cys689, His692, His698, and Cys700 together coordinate Zn(2+).

The polypeptide is AN1-type zinc finger protein 4 (ZFAND4) (Homo sapiens (Human)).